A 288-amino-acid chain; its full sequence is tRNA pseudouridine synthase B (288 aa).

Aspartate 38 serves as the catalytic Nucleophile.

Belongs to the pseudouridine synthase TruB family. Type 1 subfamily.

The catalysed reaction is uridine(55) in tRNA = pseudouridine(55) in tRNA. Responsible for synthesis of pseudouridine from uracil-55 in the psi GC loop of transfer RNAs. The sequence is that of tRNA pseudouridine synthase B from Carboxydothermus hydrogenoformans (strain ATCC BAA-161 / DSM 6008 / Z-2901).